The primary structure comprises 332 residues: 5,10-methylenetetrahydromethanopterin reductase (332 aa).

The protein belongs to the mer family.

The protein localises to the cytoplasm. The enzyme catalyses 5-methyl-5,6,7,8-tetrahydromethanopterin + oxidized coenzyme F420-(gamma-L-Glu)(n) + H(+) = 5,10-methylenetetrahydromethanopterin + reduced coenzyme F420-(gamma-L-Glu)(n). The protein operates within metabolic intermediate metabolism; lactate oxidation. Functionally, catalyzes the oxidation of methyl-H(4)MPT to methylene-H(4)MPT. In Archaeoglobus fulgidus (strain ATCC 49558 / DSM 4304 / JCM 9628 / NBRC 100126 / VC-16), this protein is 5,10-methylenetetrahydromethanopterin reductase.